The sequence spans 444 residues: DNA primase DnaG (444 aa).

The Toprim domain occupies 186-260 (DSIIVVEGRN…EVDFVARAPP (75 aa)). 3 residues coordinate Mg(2+): glutamate 192, aspartate 234, and aspartate 236.

This sequence belongs to the archaeal DnaG primase family. Forms a ternary complex with MCM helicase and DNA. Component of the archaeal exosome complex. It depends on Mg(2+) as a cofactor.

It carries out the reaction ssDNA + n NTP = ssDNA/pppN(pN)n-1 hybrid + (n-1) diphosphate.. RNA polymerase that catalyzes the synthesis of short RNA molecules used as primers for DNA polymerase during DNA replication. Also part of the exosome, which is a complex involved in RNA degradation. Acts as a poly(A)-binding protein that enhances the interaction between heteromeric, adenine-rich transcripts and the exosome. The protein is DNA primase DnaG of Thermoplasma volcanium (strain ATCC 51530 / DSM 4299 / JCM 9571 / NBRC 15438 / GSS1).